Reading from the N-terminus, the 310-residue chain is MSNNIYKIVSLYSFFSFQENSIIELKENLFSIEKNNDLSGLLIIAREGLNGTVCAEEGIIENILKLIKNIVGNNKLNIKVSYSKKKIFKKLKIKIKDEIVTMGVPEINPSEDSGTYIDSFSWNKLIKDKNTIVVDTRNHYEVSIGSFKKSINPNTENFSEFPEWVDDNLGKYIGDDDSKNIAMFCTGGIRCEKATSLLKKKGYKNIFHLQGGILKYLEDMSKEESLFEGECFVFDKRVALDHELKQGSYSICHACGMPISIEDQKNKEYREGIQCHFCVNKFSDNDRKRFEERQKQINKLKDKNQKVYKD.

In terms of domain architecture, Rhodanese spans Lys-127–Ser-225. The active-site Cysteine persulfide intermediate is Cys-185.

This sequence belongs to the TrhO family.

The catalysed reaction is uridine(34) in tRNA + AH2 + O2 = 5-hydroxyuridine(34) in tRNA + A + H2O. Functionally, catalyzes oxygen-dependent 5-hydroxyuridine (ho5U) modification at position 34 in tRNAs. The protein is tRNA uridine(34) hydroxylase of Prochlorococcus marinus subsp. pastoris (strain CCMP1986 / NIES-2087 / MED4).